The primary structure comprises 397 residues: ORC1-type DNA replication protein 8 (397 aa).

Residues 61 to 65 (VGKTA), Y211, and R223 each bind ATP.

Belongs to the CDC6/cdc18 family.

Involved in regulation of DNA replication. The sequence is that of ORC1-type DNA replication protein 8 (orc8) from Halobacterium salinarum (strain ATCC 700922 / JCM 11081 / NRC-1) (Halobacterium halobium).